Consider the following 88-residue polypeptide: Large ribosomal subunit protein bL31B (88 aa).

This sequence belongs to the bacterial ribosomal protein bL31 family. Type B subfamily. In terms of assembly, part of the 50S ribosomal subunit.

This Janthinobacterium sp. (strain Marseille) (Minibacterium massiliensis) protein is Large ribosomal subunit protein bL31B.